A 103-amino-acid chain; its full sequence is Large ribosomal subunit protein bL21 (103 aa).

Belongs to the bacterial ribosomal protein bL21 family. As to quaternary structure, part of the 50S ribosomal subunit. Contacts protein L20.

Its function is as follows. This protein binds to 23S rRNA in the presence of protein L20. In Pseudomonas fluorescens (strain Pf0-1), this protein is Large ribosomal subunit protein bL21.